The chain runs to 940 residues: Chordin (940 aa).

The N-terminal stretch at 1 to 19 is a signal peptide; it reads MMEGLLWILLSVIIASVHG. The VWFC 1 domain maps to 42 to 118; it reads SGCSFGGRFY…LPGHCCKTCP (77 aa). CHRD domains are found at residues 162-277, 279-398, 404-519, and 525-652; these read TTTD…KHRA, FAET…GRRS, SVLS…LLPY, and RRNE…VPNH. Residues Asn-347 and Asn-430 are each glycosylated (N-linked (GlcNAc...) asparagine). 3 consecutive VWFC domains span residues 689-748, 767-836, and 855-919; these read HSCF…PICE, EGCY…KECP, and RLCK…PECI.

This sequence belongs to the chordin family. In terms of assembly, interacts with twsg1 and/or bmp4. Cleaved by tolloid proteases; cleavage participates in dorsoventral patterning during early development.

Its subcellular location is the secreted. Dorsalizing factor. Key developmental protein that dorsalizes early vertebrate embryonic tissues by binding to ventralizing TGF-beta family bone morphogenetic proteins (BMPs) and sequestering them in latent complexes. The sequence is that of Chordin (chd) from Danio rerio (Zebrafish).